Consider the following 660-residue polypeptide: E3 ubiquitin-protein ligase ORTHRUS 3 (660 aa).

The segment at 12-63 (EGVCMRCKSMPPPEESLTCGTCVTPWHVSCLLSPPETLSATLQWLCPDCSGE) adopts a PHD-type zinc-finger fold. The segment at 107–129 (QLLSGKGVVDEDDEEEKKKTSKG) is disordered. The RING-type 1 zinc finger occupies 141–197 (CSFCMQSLQKPVSVRVLFALALMLVWFLESTPCGHNACLKCFLKWMGQGHRSCGTCR). The region spanning 285-434 (VRNQGLLVGE…CRFLFVRCDN (150 aa)) is the YDG domain. An RING-type 2 zinc finger spans residues 528 to 585 (CQICQKVMTNPVTTPCAHNFCKACLESKFAGTALVRERGSGGRKLRSQKSVMKCPCCP). Residues 593 to 622 (QNPQVNREVAEVIEKLKKQEEEENAKSLDE) are a coiled coil. 2 stretches are compositionally biased toward basic and acidic residues: residues 610–621 (KQEEEENAKSLD) and 637–646 (QPKKRIKLDT). The interval 610 to 660 (KQEEEENAKSLDEGQCSGTSHEEEDDEQPKKRIKLDTDAEVSATVVESDMK) is disordered.

It is found in the nucleus. The catalysed reaction is S-ubiquitinyl-[E2 ubiquitin-conjugating enzyme]-L-cysteine + [acceptor protein]-L-lysine = [E2 ubiquitin-conjugating enzyme]-L-cysteine + N(6)-ubiquitinyl-[acceptor protein]-L-lysine.. It participates in protein modification; protein ubiquitination. Functionally, E3 ubiquitin-protein ligase. May participate in CpG methylation-dependent transcriptional regulation. The chain is E3 ubiquitin-protein ligase ORTHRUS 3 (ORTH3) from Arabidopsis thaliana (Mouse-ear cress).